The chain runs to 120 residues: NAD(P)H-quinone oxidoreductase subunit 3, chloroplastic (120 aa).

3 consecutive transmembrane segments (helical) span residues 9-29, 64-84, and 88-108; these read IFWA…LISG, MFAL…PWAM, and VLGV…IVGL.

Belongs to the complex I subunit 3 family. In terms of assembly, NDH is composed of at least 16 different subunits, 5 of which are encoded in the nucleus.

It localises to the plastid. The protein resides in the chloroplast thylakoid membrane. The enzyme catalyses a plastoquinone + NADH + (n+1) H(+)(in) = a plastoquinol + NAD(+) + n H(+)(out). It carries out the reaction a plastoquinone + NADPH + (n+1) H(+)(in) = a plastoquinol + NADP(+) + n H(+)(out). Functionally, NDH shuttles electrons from NAD(P)H:plastoquinone, via FMN and iron-sulfur (Fe-S) centers, to quinones in the photosynthetic chain and possibly in a chloroplast respiratory chain. The immediate electron acceptor for the enzyme in this species is believed to be plastoquinone. Couples the redox reaction to proton translocation, and thus conserves the redox energy in a proton gradient. The polypeptide is NAD(P)H-quinone oxidoreductase subunit 3, chloroplastic (Lupinus luteus (European yellow lupine)).